The chain runs to 484 residues: MKIAIITDGSVEMGMGHVYRTLSLANELRKFNVNEIIFFTKSDEDVIKKIEENGFKVIKCSDNNDILKNIKNIKPDVVIIDDLGIEEDFAKNIRELCKKLIFFDNPNPSSNKYADIVVNAIVGSELKNRKYFDEENKTLYFYGPKYLILRNEFYKVKKEMLSRSKNKETKNILIAFGGSDPSNLTCKVLEELLSKDRDFNINVVLGPKFQYEDELNNLLKRYSKSDKIKIYKNIDNMAELMKDNDLIITSPGMTMFEALFLGIPVVVLYQNELQRECYDDYLKKISKTHLNPLKEGYFIDAEHTDLHIGKGKFEIIEAITNIYNCKKIGEDSKIIIRQITDNDLELLMAWRSNPLIYKFFYIQKEPLKWEEHYSWWMSRENRVDWIILLRENNTIRKVGSVNVSQLNTDNPEIGILIGEFFLWGKHIGRHSVSLVLKWLKNIGYKKAHARILENNIRSIKLFESLGFKKTKKGRENEWIYEVNL.

One can recognise an N-acetyltransferase domain in the interval 334-484 (IIIRQITDND…ENEWIYEVNL (151 aa)).

This is an uncharacterized protein from Methanocaldococcus jannaschii (strain ATCC 43067 / DSM 2661 / JAL-1 / JCM 10045 / NBRC 100440) (Methanococcus jannaschii).